A 218-amino-acid chain; its full sequence is Ribosome maturation factor RimM (218 aa).

Positions 141-214 (GELWWDRDLV…HIVVDPPPGL (74 aa)) constitute a PRC barrel domain.

The protein belongs to the RimM family. As to quaternary structure, binds ribosomal protein uS19.

Its subcellular location is the cytoplasm. In terms of biological role, an accessory protein needed during the final step in the assembly of 30S ribosomal subunit, possibly for assembly of the head region. Essential for efficient processing of 16S rRNA. May be needed both before and after RbfA during the maturation of 16S rRNA. It has affinity for free ribosomal 30S subunits but not for 70S ribosomes. The protein is Ribosome maturation factor RimM of Parafrankia sp. (strain EAN1pec).